The following is a 469-amino-acid chain: Argininosuccinate lyase (469 aa).

It belongs to the lyase 1 family. Argininosuccinate lyase subfamily.

It localises to the cytoplasm. The enzyme catalyses 2-(N(omega)-L-arginino)succinate = fumarate + L-arginine. The protein operates within amino-acid biosynthesis; L-arginine biosynthesis; L-arginine from L-ornithine and carbamoyl phosphate: step 3/3. This chain is Argininosuccinate lyase, found in Polaromonas naphthalenivorans (strain CJ2).